The sequence spans 556 residues: Phosphoenolpyruvate-protein phosphotransferase (556 aa).

The active-site Tele-phosphohistidine intermediate is His-186. Phosphoenolpyruvate-binding residues include Arg-288 and Arg-325. The Mg(2+) site is built by Glu-415 and Asp-439. Phosphoenolpyruvate is bound by residues 438 to 439 (ND) and Arg-449. The Proton donor role is filled by Cys-486.

This sequence belongs to the PEP-utilizing enzyme family. As to quaternary structure, homodimer. Mg(2+) is required as a cofactor.

Its subcellular location is the cytoplasm. The enzyme catalyses L-histidyl-[protein] + phosphoenolpyruvate = N(pros)-phospho-L-histidyl-[protein] + pyruvate. Its function is as follows. General (non sugar-specific) component of the phosphoenolpyruvate-dependent sugar phosphotransferase system (sugar PTS). This major carbohydrate active-transport system catalyzes the phosphorylation of incoming sugar substrates concomitantly with their translocation across the cell membrane. Enzyme I transfers the phosphoryl group from phosphoenolpyruvate (PEP) to the phosphoryl carrier protein (HPr). In Streptomyces coelicolor (strain ATCC BAA-471 / A3(2) / M145), this protein is Phosphoenolpyruvate-protein phosphotransferase (ptsI).